Reading from the N-terminus, the 184-residue chain is Large ribosomal subunit protein uL5 (184 aa).

This sequence belongs to the universal ribosomal protein uL5 family. As to quaternary structure, part of the 50S ribosomal subunit; part of the 5S rRNA/L5/L18/L25 subcomplex. Contacts the 5S rRNA and the P site tRNA. Forms a bridge to the 30S subunit in the 70S ribosome.

Functionally, this is one of the proteins that bind and probably mediate the attachment of the 5S RNA into the large ribosomal subunit, where it forms part of the central protuberance. In the 70S ribosome it contacts protein S13 of the 30S subunit (bridge B1b), connecting the 2 subunits; this bridge is implicated in subunit movement. Contacts the P site tRNA; the 5S rRNA and some of its associated proteins might help stabilize positioning of ribosome-bound tRNAs. In Agrobacterium fabrum (strain C58 / ATCC 33970) (Agrobacterium tumefaciens (strain C58)), this protein is Large ribosomal subunit protein uL5.